A 131-amino-acid chain; its full sequence is Small ribosomal subunit protein uS8 (131 aa).

Belongs to the universal ribosomal protein uS8 family. As to quaternary structure, part of the 30S ribosomal subunit. Contacts proteins S5 and S12.

Functionally, one of the primary rRNA binding proteins, it binds directly to 16S rRNA central domain where it helps coordinate assembly of the platform of the 30S subunit. The protein is Small ribosomal subunit protein uS8 of Campylobacter fetus subsp. fetus (strain 82-40).